The following is a 171-amino-acid chain: Probable deoxyuridine 5'-triphosphate nucleotidohydrolase (171 aa).

It belongs to the dCTP deaminase family. Archaeal dUTPase subfamily.

The catalysed reaction is dUTP + H2O = dUMP + diphosphate + H(+). The protein operates within pyrimidine metabolism; dUMP biosynthesis; dUMP from dCTP (dUTP route): step 2/2. In terms of biological role, this enzyme is involved in nucleotide metabolism: it produces dUMP, the immediate precursor of thymidine nucleotides and it decreases the intracellular concentration of dUTP so that uracil cannot be incorporated into DNA. The chain is Probable deoxyuridine 5'-triphosphate nucleotidohydrolase from Methanosarcina acetivorans (strain ATCC 35395 / DSM 2834 / JCM 12185 / C2A).